Reading from the N-terminus, the 323-residue chain is Breast cancer metastasis-suppressor 1-like protein (323 aa).

Residues 1 to 15 are compositionally biased toward basic and acidic residues; that stretch reads MPVHSREKKENNHDE. Residues 1 to 56 are disordered; the sequence is MPVHSREKKENNHDEMEVDYGENEGSTSEEEETESSSVSEEGDSSEMDDEDCERRR. A compositionally biased stretch (acidic residues) spans 16-51; sequence MEVDYGENEGSTSEEEETESSSVSEEGDSSEMDDED. Coiled coils occupy residues 50 to 82 and 147 to 178; these read EDCERRRMECLDEMSNLEKQFTDLKDQLYKERL and EKLLLYDTVQSELEEKIRRLEEDRHSIDITSE.

Belongs to the BRMS1 family.

Its subcellular location is the nucleus. Functionally, involved in the histone deacetylase (HDAC1)-dependent transcriptional repression activity. In Gallus gallus (Chicken), this protein is Breast cancer metastasis-suppressor 1-like protein (BRMS1L).